An 821-amino-acid polypeptide reads, in one-letter code: Calpain-3 (821 aa).

A disordered region spans residues 1-34; it reads MPTVISASMAPRTGASQVPRTMPQAAQGKGTEAG. The Calpain catalytic domain maps to 73-417; sequence LYLDPEFPPD…FTKLEICNLT (345 aa). Residues C128, H334, and N358 contribute to the active site. Residues 418–586 are domain III; that stretch reads ADALESDKLQ…KRNLSEEVEN (169 aa). The linker stretch occupies residues 587-649; the sequence is TISVDRPVRK…EPSNTDQESE (63 aa). A disordered region spans residues 603–652; it reads IFVSDRANSNKELGVDQESEEGQDKTSPDKQEKSPKPEPSNTDQESEEQQ. Over residues 624–638 the composition is skewed to basic and acidic residues; the sequence is GQDKTSPDKQEKSPK. Over residues 641–652 the composition is skewed to polar residues; that stretch reads PSNTDQESEEQQ. EF-hand domains follow at residues 649 to 683, 692 to 725, 722 to 757, and 787 to 821; these read EEQQ…VVNK, FTLE…KKIK, KKIK…AGFH, and VRLE…TMYA. The interval 650 to 821 is domain IV; that stretch reads EQQQFRNIFR…LEWLQLTMYA (172 aa). Positions 662, 665, 667, 672, 705, 707, 709, 711, 716, 735, 737, 739, 741, 746, 800, 802, 804, and 806 each coordinate Ca(2+).

It belongs to the peptidase C2 family. In terms of assembly, homodimer; via EF-hand domain 4. Interacts with TTN/titin. Interacts with CMYA5; this interaction, which results in CMYA5 proteolysis, may protect CAPN3 from autolysis. Interacts with SIMC1. Interacts with UTP25; the interaction is required for CAPN3 translocation to the nucleolus. In terms of tissue distribution, skeletal muscle.

It localises to the cytoplasm. The protein localises to the nucleus. Its subcellular location is the nucleolus. The catalysed reaction is Broad endopeptidase activity.. Its activity is regulated as follows. Activated by micromolar concentrations of calcium and inhibited by calpastatin. Functionally, calcium-regulated non-lysosomal thiol-protease. Proteolytically cleaves CTBP1. Mediates, with UTP25, the proteasome-independent degradation of p53/TP53. The sequence is that of Calpain-3 (CAPN3) from Sus scrofa (Pig).